A 60-amino-acid chain; its full sequence is MKIKVTLVKSPIGYSENQRKVLKSLGLGKMGSSVVHDDTPNIQGMIRKCAHLVAVENVAE.

Belongs to the universal ribosomal protein uL30 family. As to quaternary structure, part of the 50S ribosomal subunit.

This chain is Large ribosomal subunit protein uL30, found in Desulfitobacterium hafniense (strain DSM 10664 / DCB-2).